The primary structure comprises 268 residues: Phosphatidylglycerol--prolipoprotein diacylglyceryl transferase (268 aa).

4 helical membrane-spanning segments follow: residues 14 to 34, 57 to 77, 90 to 110, and 117 to 137; these read LGPIKIHWYGLMYLLGIFAGW, LTFYVALGVILGGRIGYIIFY, FFLWDGGMSFHGGFIGVLIAF, and IGANFFDLGEFIAPVIPIGLG. An a 1,2-diacyl-sn-glycero-3-phospho-(1'-sn-glycerol)-binding site is contributed by R140. The next 3 membrane-spanning stretches (helical) occupy residues 174–194, 200–220, and 238–258; these read QLFEFFFEGVVLFSVLWLVTI, YLVLGLFMFLYGCARFICEFF, and GQILSIPMILLGAVILIAVFI.

The protein belongs to the Lgt family.

It is found in the cell inner membrane. It carries out the reaction L-cysteinyl-[prolipoprotein] + a 1,2-diacyl-sn-glycero-3-phospho-(1'-sn-glycerol) = an S-1,2-diacyl-sn-glyceryl-L-cysteinyl-[prolipoprotein] + sn-glycerol 1-phosphate + H(+). It participates in protein modification; lipoprotein biosynthesis (diacylglyceryl transfer). Catalyzes the transfer of the diacylglyceryl group from phosphatidylglycerol to the sulfhydryl group of the N-terminal cysteine of a prolipoprotein, the first step in the formation of mature lipoproteins. This chain is Phosphatidylglycerol--prolipoprotein diacylglyceryl transferase, found in Francisella tularensis subsp. mediasiatica (strain FSC147).